The following is a 373-amino-acid chain: Spermidine/putrescine import ATP-binding protein PotA (373 aa).

An ABC transporter domain is found at 5-235 (IVFEHVSKKF…PKSSFVADFI (231 aa)). 37–44 (GPSGCGKT) contacts ATP.

This sequence belongs to the ABC transporter superfamily. Spermidine/putrescine importer (TC 3.A.1.11.1) family. In terms of assembly, the complex is composed of two ATP-binding proteins (PotA), two transmembrane proteins (PotB and PotC) and a solute-binding protein (PotD).

It is found in the cell inner membrane. The catalysed reaction is ATP + H2O + polyamine-[polyamine-binding protein]Side 1 = ADP + phosphate + polyamineSide 2 + [polyamine-binding protein]Side 1.. Functionally, part of the ABC transporter complex PotABCD involved in spermidine/putrescine import. Responsible for energy coupling to the transport system. The protein is Spermidine/putrescine import ATP-binding protein PotA of Protochlamydia amoebophila (strain UWE25).